A 139-amino-acid polypeptide reads, in one-letter code: ATP synthase epsilon chain, chloroplastic (139 aa).

The protein belongs to the ATPase epsilon chain family. In terms of assembly, F-type ATPases have 2 components, CF(1) - the catalytic core - and CF(0) - the membrane proton channel. CF(1) has five subunits: alpha(3), beta(3), gamma(1), delta(1), epsilon(1). CF(0) has three main subunits: a, b and c.

The protein resides in the plastid. It is found in the chloroplast thylakoid membrane. In terms of biological role, produces ATP from ADP in the presence of a proton gradient across the membrane. In Welwitschia mirabilis (Tree tumbo), this protein is ATP synthase epsilon chain, chloroplastic.